A 70-amino-acid polypeptide reads, in one-letter code: Protein SlyX homolog (70 aa).

Belongs to the SlyX family.

In Rhizobium meliloti (strain 1021) (Ensifer meliloti), this protein is Protein SlyX homolog.